The following is an 85-amino-acid chain: METVISFTAIAVAIMIGLAALGTGIGFAILGGKFLEASARQPELAPALQTKMFIVAGLLDAISMIAVGVALFFVFANPFLGQLAG.

Transmembrane regions (helical) follow at residues 10–30 and 53–73; these read IAVA…FAIL and FIVA…ALFF.

The protein belongs to the ATPase C chain family. In terms of assembly, F-type ATPases have 2 components, F(1) - the catalytic core - and F(0) - the membrane proton channel. F(1) has five subunits: alpha(3), beta(3), gamma(1), delta(1), epsilon(1). F(0) has three main subunits: a(1), b(2) and c(10-14). The alpha and beta chains form an alternating ring which encloses part of the gamma chain. F(1) is attached to F(0) by a central stalk formed by the gamma and epsilon chains, while a peripheral stalk is formed by the delta and b chains.

It is found in the cell inner membrane. Functionally, f(1)F(0) ATP synthase produces ATP from ADP in the presence of a proton or sodium gradient. F-type ATPases consist of two structural domains, F(1) containing the extramembraneous catalytic core and F(0) containing the membrane proton channel, linked together by a central stalk and a peripheral stalk. During catalysis, ATP synthesis in the catalytic domain of F(1) is coupled via a rotary mechanism of the central stalk subunits to proton translocation. In terms of biological role, key component of the F(0) channel; it plays a direct role in translocation across the membrane. A homomeric c-ring of between 10-14 subunits forms the central stalk rotor element with the F(1) delta and epsilon subunits. This chain is ATP synthase subunit c, found in Shewanella halifaxensis (strain HAW-EB4).